Here is a 185-residue protein sequence, read N- to C-terminus: UPF0397 protein PAM_019 (185 aa).

The next 5 membrane-spanning stretches (helical) occupy residues 13–33 (IGLS…PVGF), 42–62 (AFLA…VGLI), 69–89 (FILF…IGFI), 109–129 (IVYF…FFAP), and 143–163 (VYLQ…VVGI).

This sequence belongs to the UPF0397 family.

The protein localises to the cell membrane. This Onion yellows phytoplasma (strain OY-M) protein is UPF0397 protein PAM_019.